The sequence spans 1010 residues: MIMRSPETSGASMPQSTAHVPDGEQPRASGGSPGAGRLLQHRLELVEDLWQTVLRSECPPEQSERLLRLKQLSDPVALEGRDGESSSEAIVELIRSMDLSEAIAAARAFSLYFQLINILEQRIEEDSYLDSLRPSRSQDDETAAPFDPFAPPLASQTDPATFGEVFERLRRMNVPPAQVETLLRELDIRLVFTAHPTEIVRHTVRHKQRKVASLLQRLQSEPALPRYDEEELRRQLEEEIRLWWRTDELHQFKPTVLDEVDSTLHYFQQVLFEAMPQLRRRLVSSLSRHYPDVQFPQASFCTFGSWVGSDRDGNPSVTPEITWRTACYQRQLMLELYIGSVQSLRNQLSISMQWSQVAPPLLESLEMDRLRFPEIYERRAARYRLEPYRLKLSYILERLELTLQRNHQMSEAGWQSPPEPAATAPTDGIPGHEALHYTAIDQFRSDLELIRNSLVSTELSCEQLDTLLNQVHIFGFSLASLDIRQESTRHSDAIDELTTHLQLPKAYGAMEESERVAWLLEELQTRRPLIPAAVEWSEATAQTFAVFQMLHRLQQEFGQRICHSYVISMSHTASDLLEVMLLAKEIGLVDPQAGKASLLVVPLFETVEDLQRAPAVMDGLFQTPIYRNLLPSVGVQRQPLQELMLGYSDSNKDSGFLSSNWEIHQAQIALQTLASSHGVALRLFHGRGGSVSRGGGPAYQAILAQPSGTLQGRIKITEQGEVLASKYGLPELALYNLETVTTAVVQNSLVTNQLDATPSWNQLMSRVAKRSREHYRALVHDNPDLVAFFQQVTPIEEISKLQISSRPARRKTGARDLSSLRAIPWVFGWTQSRFLLPSWFGVGTALAEEVNDDPEQLDLLRRLHQRWPFFRMLISKVEMTLSKVDLDLAHHYMSSLGNPEQRDAFEGIFKVIADEYGRTLKLVLEITGQSRLLGADQNLQLSVDLRNRTIVPLGFLQVALLRRLRDQNRQPPMSESPGTPEDRRTYSRSELLRGALLTLNGIAAGMRNTG.

Residues 1-18 show a composition bias toward polar residues; that stretch reads MIMRSPETSGASMPQSTA. Disordered stretches follow at residues 1-36 and 132-154; these read MIMR…PGAG and LRPS…PPLA. Active-site residues include His195 and Lys652. The segment at 967–986 is disordered; it reads QNRQPPMSESPGTPEDRRTY.

This sequence belongs to the PEPCase type 1 family. It depends on Mg(2+) as a cofactor.

It catalyses the reaction oxaloacetate + phosphate = phosphoenolpyruvate + hydrogencarbonate. Forms oxaloacetate, a four-carbon dicarboxylic acid source for the tricarboxylic acid cycle. This Parasynechococcus marenigrum (strain WH8102) protein is Phosphoenolpyruvate carboxylase.